The primary structure comprises 347 residues: NADH-ubiquinone oxidoreductase chain 2 (347 aa).

Transmembrane regions (helical) follow at residues 3-23 (PLIFTMILLTVMLGTAIVMTT), 25-45 (HWVMAWIGFEMNMLAVIPILM), 59-79 (YFLTQATASMLLMLAIVINLV), 96-116 (IIMTLALAMKLGLAPFHFWVP), 122-142 (VQLSSGLILLTWQKLAPMSIL), 149-169 (INLDLLLLMSLLSILVGGWGG), 178-198 (IMAYSSIAHMGWMTAIMVYNP), 200-220 (MALLNLVIYILLTTTTFMMLM), 240-260 (LTTAILTIMLSLGGLPPLSGF), 276-296 (MIMPTIMAVMALLNLYFYMRL), and 326-346 (LSPLIILSTLILPLSPMLALL).

This sequence belongs to the complex I subunit 2 family. As to quaternary structure, core subunit of respiratory chain NADH dehydrogenase (Complex I) which is composed of 45 different subunits. Interacts with TMEM242.

The protein resides in the mitochondrion inner membrane. It catalyses the reaction a ubiquinone + NADH + 5 H(+)(in) = a ubiquinol + NAD(+) + 4 H(+)(out). Its function is as follows. Core subunit of the mitochondrial membrane respiratory chain NADH dehydrogenase (Complex I) which catalyzes electron transfer from NADH through the respiratory chain, using ubiquinone as an electron acceptor. Essential for the catalytic activity and assembly of complex I. This is NADH-ubiquinone oxidoreductase chain 2 from Nyctimene albiventer (Common tube-nosed fruit bat).